The following is a 94-amino-acid chain: Phosphoribosyl-ATP pyrophosphatase (94 aa).

Belongs to the PRA-PH family.

It localises to the cytoplasm. The enzyme catalyses 1-(5-phospho-beta-D-ribosyl)-ATP + H2O = 1-(5-phospho-beta-D-ribosyl)-5'-AMP + diphosphate + H(+). It functions in the pathway amino-acid biosynthesis; L-histidine biosynthesis; L-histidine from 5-phospho-alpha-D-ribose 1-diphosphate: step 2/9. This Saccharolobus islandicus (strain Y.N.15.51 / Yellowstone #2) (Sulfolobus islandicus) protein is Phosphoribosyl-ATP pyrophosphatase.